Here is a 122-residue protein sequence, read N- to C-terminus: Glycine cleavage system H protein (122 aa).

The Lipoyl-binding domain occupies 19–101 (VATVGITDYA…QGKAWFFKIK (83 aa)). Lys-60 carries the N6-lipoyllysine modification.

Belongs to the GcvH family. The glycine cleavage system is composed of four proteins: P, T, L and H. (R)-lipoate is required as a cofactor.

The glycine cleavage system catalyzes the degradation of glycine. The H protein shuttles the methylamine group of glycine from the P protein to the T protein. The chain is Glycine cleavage system H protein from Bradyrhizobium diazoefficiens (strain JCM 10833 / BCRC 13528 / IAM 13628 / NBRC 14792 / USDA 110).